The primary structure comprises 172 residues: DNA-directed RNA polymerase II subunit RPB7 (172 aa).

This sequence belongs to the eukaryotic RPB7/RPC8 RNA polymerase subunit family. As to quaternary structure, component of the RNA polymerase II (Pol II) core complex consisting of 12 subunits: a ten-subunit catalytic core composed of POLR2A/RPB1, POLR2B/RPB2, POLR2C/RPB3, POLR2I/RPB9, POLR2J/RPB11, POLR2E/RPABC1, POLR2F/RPABC2, POLR2H/RPABC3, POLR2K/RPABC4 and POLR2L/RPABC5 and a mobile stalk composed of two subunits POLR2D/RPB4 and POLR2G/RPB7, protruding from the core and functioning primarily in transcription initiation. Part of Pol II(G) complex, in which Pol II core associates with an additional subunit POLR2M; unlike conventional Pol II, Pol II(G) functions as a transcriptional repressor. Part of TBP-based Pol II pre-initiation complex (PIC), in which Pol II core assembles with general transcription factors and other specific initiation factors including GTF2E1, GTF2E2, GTF2F1, GTF2F2, TCEA1, ERCC2, ERCC3, GTF2H2, GTF2H3, GTF2H4, GTF2H5, GTF2A1, GTF2A2, GTF2B and TBP; this large multi-subunit PIC complex mediates DNA unwinding and targets Pol II core to the transcription start site where the first phosphodiester bond forms.

The protein localises to the nucleus. Functionally, core component of RNA polymerase II (Pol II), a DNA-dependent RNA polymerase which synthesizes mRNA precursors and many functional non-coding RNAs using the four ribonucleoside triphosphates as substrates. Pol II is the central component of the basal RNA polymerase II transcription machinery. It is composed of mobile elements that move relative to each other. POLR2G/RPB7 is part of a subcomplex with POLR2D/RPB4 that binds to a pocket formed by POLR2A/RPB1, POLR2B/RPB2 and POLR2F/RPABC2 at the base of the clamp element. The POLR2D/RPB4-POLR2G/RPB7 subcomplex seems to lock the clamp via POLR2G/RPB7 in the closed conformation thus preventing double-stranded DNA to enter the active site cleft. The POLR2D/RPB4-POLR2G/RPB7 subcomplex binds single-stranded DNA and RNA. In Bos taurus (Bovine), this protein is DNA-directed RNA polymerase II subunit RPB7 (POLR2G).